Reading from the N-terminus, the 130-residue chain is Small ribosomal subunit protein uS8 (130 aa).

Belongs to the universal ribosomal protein uS8 family. Component of the small ribosomal subunit (SSU). Mature N.crassa ribosomes consist of a small (40S) and a large (60S) subunit. The 40S small subunit contains 1 molecule of ribosomal RNA (18S rRNA) and at least 32 different proteins. The large 60S subunit contains 3 rRNA molecules (26S, 5.8S and 5S rRNA) and at least 42 different proteins.

The protein resides in the cytoplasm. Its function is as follows. Component of the ribosome, a large ribonucleoprotein complex responsible for the synthesis of proteins in the cell. The small ribosomal subunit (SSU) binds messenger RNAs (mRNAs) and translates the encoded message by selecting cognate aminoacyl-transfer RNA (tRNA) molecules. The large subunit (LSU) contains the ribosomal catalytic site termed the peptidyl transferase center (PTC), which catalyzes the formation of peptide bonds, thereby polymerizing the amino acids delivered by tRNAs into a polypeptide chain. The nascent polypeptides leave the ribosome through a tunnel in the LSU and interact with protein factors that function in enzymatic processing, targeting, and the membrane insertion of nascent chains at the exit of the ribosomal tunnel. This is Small ribosomal subunit protein uS8 (crp-27) from Neurospora crassa (strain ATCC 24698 / 74-OR23-1A / CBS 708.71 / DSM 1257 / FGSC 987).